The sequence spans 296 residues: Non-homologous end joining protein Ku (296 aa).

Residues 11–187 (TFGLVNIPVK…ELPEAGEPSS (177 aa)) enclose the Ku domain. Positions 254–296 (AAARRRGDEHEAPARGERRHAAAAAARTTGRPRAARASRKKRG) are disordered. Over residues 258–273 (RRGDEHEAPARGERRH) the composition is skewed to basic and acidic residues. Over residues 275-285 (AAAAARTTGRP) the composition is skewed to low complexity. The segment covering 286–296 (RAARASRKKRG) has biased composition (basic residues).

Belongs to the prokaryotic Ku family. Homodimer. Interacts with LigD.

With LigD forms a non-homologous end joining (NHEJ) DNA repair enzyme, which repairs dsDNA breaks with reduced fidelity. Binds linear dsDNA with 5'- and 3'- overhangs but not closed circular dsDNA nor ssDNA. Recruits and stimulates the ligase activity of LigD. The chain is Non-homologous end joining protein Ku from Anaeromyxobacter sp. (strain K).